Consider the following 600-residue polypeptide: MSSISMHAGPLNISAANNHHPSWDRRVSKPRRVAAKHLRLRLSCSLQLDGKPLDETRRSANYQPSAWDFNFIQSLHNQYKEDKYVTRHTELTAQVKMLLEEETDAVQQLDLIEDLKNLGINYLFKDKIQQILNHIYNQHRCFQNNQVEGNDLYFTALGFRLLRQHGFEVSQEVFDRFTNEEGTDFNPSLIDDTKGLLQLYEASFLLREGEDTLELARQFSTKLLQKKVDEDGDREVGDNLLVWIRHSLELPLHWRIHRIEARWFLDAYATRHDMNPIIFELAKLDFNITQATQQEELRDLSRWWNSAGLVEKLSFARDRVVESYFWAIGTLEPRQYGYQRKLVAKIIALISVVDDVYDIYGTLDELKLFTDVMRRWDAESFDQLPYYMKICYLIINNFIFELAYDILKDKGFNSLSYLQRSWLDVVEGYFTEAKWYYSGYTPNLEEYLKNAKITVTCPMILSQIYFTIASSIEKPELESMYKYHDILYLSGLLLRLPDDLGTALHELKRGDVPKAMQCYMKEKNVPEKEAREHVRFLIREASKQMNTVSAADCPFPDDFVAAAANLGRVANFVYVDGDGFGDQHSKMLQQIAALMFEPYD.

The interval 1-27 is disordered; the sequence is MSSISMHAGPLNISAANNHHPSWDRRV. The transit peptide at 1–31 directs the protein to the chloroplast; that stretch reads MSSISMHAGPLNISAANNHHPSWDRRVSKPR. Residues Asp-354, Asp-358, Asp-498, and Glu-506 each contribute to the Mg(2+) site. Positions 354–358 match the DDXXD motif motif; that stretch reads DDVYD.

Belongs to the terpene synthase family. Tpsa subfamily. Mg(2+) is required as a cofactor. Requires Mn(2+) as cofactor. In terms of tissue distribution, expressed at low levels in leaves.

It localises to the plastid. It is found in the chloroplast. It carries out the reaction (2E)-geranyl diphosphate = alpha-pinene + diphosphate. Its pathway is secondary metabolite biosynthesis; terpenoid biosynthesis. Functionally, monoterpene synthase involved in the biosynthesis of volatile compounds widely used in aromatherapy and folk medicine, and present in culinary herbs. Mediates the conversion of (2E)-geranyl diphosphate (GPP) into alpha-pinene and, as minor compounds, into alpha-phellandrene, limonene and alpha-terpinolene. In Lavandula viridis (Green lavender), this protein is Alpha pinene synthase, chloroplastic.